Reading from the N-terminus, the 462-residue chain is C4-dicarboxylate transport transcriptional regulatory protein DctD (462 aa).

The 115-residue stretch at 12-126 (QVLLIDDDPH…ALLDSVRRAL (115 aa)) folds into the Response regulatory domain. Asp61 bears the 4-aspartylphosphate mark. One can recognise a Sigma-54 factor interaction domain in the interval 152 to 381 (LIGRSAGMQR…LQNAAERFAL (230 aa)). Residues 180 to 187 (GETGAGKE) and 243 to 252 (ANGGTLFLDE) each bind ATP.

In terms of processing, phosphorylated by DctB.

Member of the two-component regulatory system DctB/DctD, which regulates C4-dicarboxylate transport via regulation of expression of the dctPQM operon and dctA. The polypeptide is C4-dicarboxylate transport transcriptional regulatory protein DctD (Pseudomonas aeruginosa (strain ATCC 15692 / DSM 22644 / CIP 104116 / JCM 14847 / LMG 12228 / 1C / PRS 101 / PAO1)).